The primary structure comprises 132 residues: Small ribosomal subunit protein uS8 (132 aa).

The protein belongs to the universal ribosomal protein uS8 family. In terms of assembly, part of the 30S ribosomal subunit. Contacts proteins S5 and S12.

One of the primary rRNA binding proteins, it binds directly to 16S rRNA central domain where it helps coordinate assembly of the platform of the 30S subunit. The chain is Small ribosomal subunit protein uS8 from Mycobacterium bovis (strain ATCC BAA-935 / AF2122/97).